Consider the following 98-residue polypeptide: Plastocyanin (98 aa).

Residues 1–98 (AQIVKLGGDD…AGMKMTITVQ (98 aa)) enclose the Plastocyanin-like domain. Cu(2+)-binding residues include H38, C83, H86, and M91.

The protein belongs to the plastocyanin family. The cofactor is Cu(2+).

It is found in the plastid. The protein localises to the chloroplast thylakoid membrane. Its function is as follows. Participates in electron transfer between P700 and the cytochrome b6-f complex in photosystem I. Has antiviral activity against Potato virus Y (strain N). This chain is Plastocyanin (PETE), found in Ulva pertusa (Sea lettuce).